The primary structure comprises 240 residues: Orotidine 5'-phosphate decarboxylase (240 aa).

Residues Asp-10, Lys-32, 59–68 (DLKLHDIPNT), Thr-122, Arg-183, Gln-192, Gly-212, and Arg-213 contribute to the substrate site. The Proton donor role is filled by Lys-61.

It belongs to the OMP decarboxylase family. Type 1 subfamily. In terms of assembly, homodimer.

It carries out the reaction orotidine 5'-phosphate + H(+) = UMP + CO2. It participates in pyrimidine metabolism; UMP biosynthesis via de novo pathway; UMP from orotate: step 2/2. Its function is as follows. Catalyzes the decarboxylation of orotidine 5'-monophosphate (OMP) to uridine 5'-monophosphate (UMP). This Carboxydothermus hydrogenoformans (strain ATCC BAA-161 / DSM 6008 / Z-2901) protein is Orotidine 5'-phosphate decarboxylase.